The chain runs to 119 residues: NADH-quinone oxidoreductase subunit A (119 aa).

Transmembrane regions (helical) follow at residues 7-27 (FPVL…VSIG), 63-83 (LVAI…PWGV), and 88-108 (IGWP…LGFA).

It belongs to the complex I subunit 3 family. As to quaternary structure, NDH-1 is composed of 14 different subunits. Subunits NuoA, H, J, K, L, M, N constitute the membrane sector of the complex.

It localises to the cell inner membrane. It catalyses the reaction a quinone + NADH + 5 H(+)(in) = a quinol + NAD(+) + 4 H(+)(out). In terms of biological role, NDH-1 shuttles electrons from NADH, via FMN and iron-sulfur (Fe-S) centers, to quinones in the respiratory chain. The immediate electron acceptor for the enzyme in this species is believed to be ubiquinone. Couples the redox reaction to proton translocation (for every two electrons transferred, four hydrogen ions are translocated across the cytoplasmic membrane), and thus conserves the redox energy in a proton gradient. This is NADH-quinone oxidoreductase subunit A from Paraburkholderia phytofirmans (strain DSM 17436 / LMG 22146 / PsJN) (Burkholderia phytofirmans).